Here is a 372-residue protein sequence, read N- to C-terminus: Alanine dehydrogenase (372 aa).

Substrate contacts are provided by R15 and K75. Catalysis depends on H96, which acts as the Proton donor/acceptor. NAD(+)-binding positions include S134, 178 to 179 (TA), D198, S220, 239 to 240 (VL), 266 to 269 (IAID), R279, and 298 to 301 (VANM). The Proton donor/acceptor role is filled by D269.

The protein belongs to the AlaDH/PNT family. Homohexamer.

The protein resides in the cytoplasm. The catalysed reaction is L-alanine + NAD(+) + H2O = pyruvate + NH4(+) + NADH + H(+). It functions in the pathway amino-acid degradation; L-alanine degradation via dehydrogenase pathway; NH(3) and pyruvate from L-alanine: step 1/1. Its function is as follows. Catalyzes the reversible reductive amination of pyruvate to L-alanine. A key factor in the assimilation of L-alanine as an energy source via the tricarboxylic acid cycle during sporulation. The chain is Alanine dehydrogenase (ald) from Geobacillus stearothermophilus (Bacillus stearothermophilus).